The chain runs to 375 residues: FAD-dependent catabolic D-arginine dehydrogenase DauA (375 aa).

Residues alanine 14, glutamate 32–arginine 33, serine 41–histidine 48, alanine 171, and glycine 331–glutamine 336 each bind FAD.

Belongs to the FAD-dependent glycerol-3-phosphate dehydrogenase family. Monomer. FAD is required as a cofactor.

It carries out the reaction D-arginine + A + H2O = 5-guanidino-2-oxopentanoate + AH2 + NH4(+). It catalyses the reaction a D-alpha-amino acid + A + H2O = a 2-oxocarboxylate + AH2 + NH4(+). Its activity is regulated as follows. Inhibited by D-arginine and D-lysine at high concentration. DauA is highly expressed within the cystic fibrosis (CF) lung, and it is required for virulence via the optimal production of hydrogen cyanide, pyocyanine, pyoverdine, rhamnolipid and alginate during biofilm formation. Involved in the catabolism of D-lysine and D-arginine. Under aerobic conditions, the arginine succinyltransferase (AST) and arginine transaminase (ATA) pathways are 2 major routes for L-arginine utilization as the sole source of carbon and nitrogen. The D-to-L racemization of arginine by DauA and DauB is necessary, before to be channeled into the AST and/or ATA pathways. DauA catalyzes the flavin-dependent oxidative deamination of D-arginine into 2-ketoarginine (2-KA) and ammonia. It also has dehydrogenase activity towards D-lysine, D-tyrosine, D-methionine, D-phenylalanine, D-ornithine, D-histidine and D-leucine as substrates. In Pseudomonas aeruginosa (strain ATCC 15692 / DSM 22644 / CIP 104116 / JCM 14847 / LMG 12228 / 1C / PRS 101 / PAO1), this protein is FAD-dependent catabolic D-arginine dehydrogenase DauA.